The chain runs to 739 residues: Protein NPGR2 (739 aa).

The segment at 32 to 71 (EQMRHREEEDKKSEVGVGRDYNGSSALSTAESENAKKLDN) is disordered. Residues 33-45 (QMRHREEEDKKSE) show a composition bias toward basic and acidic residues. Polar residues predominate over residues 53-63 (NGSSALSTAES). 9 TPR repeats span residues 90–127 (EEAR…KMKT), 162–195 (FEAI…VETS), 215–248 (TKAV…HWKL), 465–498 (PRVV…GAES), 500–533 (LEVW…TGKW), 536–569 (GKLL…LQVQ), 592–625 (LGTW…APYS), 626–659 (SVRY…DPMH), and 697–733 (HSAW…EETM).

As to quaternary structure, interacts with calmodulin in a calcium-dependent manner. As to expression, expressed in pollen, flowers and fruits.

In Arabidopsis thaliana (Mouse-ear cress), this protein is Protein NPGR2.